The sequence spans 138 residues: Cysteine desulfuration protein SufE (138 aa).

Cys51 (cysteine persulfide intermediate) is an active-site residue.

The protein belongs to the SufE family. As to quaternary structure, homodimer. Interacts with SufS.

It localises to the cytoplasm. The protein operates within cofactor biosynthesis; iron-sulfur cluster biosynthesis. In terms of biological role, participates in cysteine desulfuration mediated by SufS. Cysteine desulfuration mobilizes sulfur from L-cysteine to yield L-alanine and constitutes an essential step in sulfur metabolism for biosynthesis of a variety of sulfur-containing biomolecules. Functions as a sulfur acceptor for SufS, by mediating the direct transfer of the sulfur atom from the S-sulfanylcysteine of SufS, an intermediate product of cysteine desulfuration process. The sequence is that of Cysteine desulfuration protein SufE from Shigella boydii serotype 18 (strain CDC 3083-94 / BS512).